The following is a 109-amino-acid chain: uncharacterized protein (109 aa).

Its subcellular location is the mitochondrion. This is an uncharacterized protein from Saccharomyces cerevisiae (strain ATCC 204508 / S288c) (Baker's yeast).